Here is a 290-residue protein sequence, read N- to C-terminus: Ribosomal RNA small subunit methyltransferase A (290 aa).

Residues asparagine 27, leucine 29, glycine 54, glutamate 75, aspartate 100, and asparagine 125 each coordinate S-adenosyl-L-methionine.

It belongs to the class I-like SAM-binding methyltransferase superfamily. rRNA adenine N(6)-methyltransferase family. RsmA subfamily.

The protein localises to the cytoplasm. It catalyses the reaction adenosine(1518)/adenosine(1519) in 16S rRNA + 4 S-adenosyl-L-methionine = N(6)-dimethyladenosine(1518)/N(6)-dimethyladenosine(1519) in 16S rRNA + 4 S-adenosyl-L-homocysteine + 4 H(+). Specifically dimethylates two adjacent adenosines (A1518 and A1519) in the loop of a conserved hairpin near the 3'-end of 16S rRNA in the 30S particle. May play a critical role in biogenesis of 30S subunits. This is Ribosomal RNA small subunit methyltransferase A from Streptococcus pneumoniae (strain P1031).